The sequence spans 409 residues: Elongation factor Tu (409 aa).

One can recognise a tr-type G domain in the interval 10-214; sequence KPHVNVGTIG…AVDNYIPTPE (205 aa). The segment at 19-26 is G1; that stretch reads GHVDHGKT. Residue 19–26 coordinates GTP; the sequence is GHVDHGKT. Mg(2+) is bound at residue threonine 26. A G2 region spans residues 60–64; sequence GITIN. The segment at 81–84 is G3; it reads DCPG. GTP is bound by residues 81–85 and 136–139; these read DCPGH and NKVD. The tract at residues 136 to 139 is G4; the sequence is NKVD. Residues 174 to 176 form a G5 region; that stretch reads SGL.

It belongs to the TRAFAC class translation factor GTPase superfamily. Classic translation factor GTPase family. EF-Tu/EF-1A subfamily. In terms of assembly, monomer.

The protein localises to the cytoplasm. It carries out the reaction GTP + H2O = GDP + phosphate + H(+). In terms of biological role, GTP hydrolase that promotes the GTP-dependent binding of aminoacyl-tRNA to the A-site of ribosomes during protein biosynthesis. The sequence is that of Elongation factor Tu from Thermosynechococcus vestitus (strain NIES-2133 / IAM M-273 / BP-1).